We begin with the raw amino-acid sequence, 209 residues long: Redox-sensing transcriptional repressor Rex (209 aa).

The segment at residues 16–55 (VYIQVLTGLKRDGVEVISSEKLARACSVNPSQIRKDLAYF) is a DNA-binding region (H-T-H motif). Residue 90-95 (GVGNLG) participates in NAD(+) binding.

Belongs to the transcriptional regulatory Rex family. In terms of assembly, homodimer.

It localises to the cytoplasm. In terms of biological role, modulates transcription in response to changes in cellular NADH/NAD(+) redox state. The polypeptide is Redox-sensing transcriptional repressor Rex (Maridesulfovibrio salexigens (strain ATCC 14822 / DSM 2638 / NCIMB 8403 / VKM B-1763) (Desulfovibrio salexigens)).